The primary structure comprises 94 residues: Protein RESPONSE TO LOW SULFUR 1 (94 aa).

Residues 8–35 (VTVAAEEMDELRRRNIELSREVAEMKTE) adopt a coiled-coil conformation.

This chain is Protein RESPONSE TO LOW SULFUR 1, found in Arabidopsis thaliana (Mouse-ear cress).